Here is an 800-residue protein sequence, read N- to C-terminus: Putative antiporter subunit mnhA2 (800 aa).

Transmembrane regions (helical) follow at residues 1–21 (MSLV…LLMS), 33–53 (IALV…PSVA), 78–98 (GLSL…FFYA), 118–138 (LFMF…MYIF), 167–187 (FMIT…LYIM), 207–227 (GLFI…SAQF), 241–261 (TPVS…FLLL), 273–293 (YIYI…ITAL), 300–320 (GILA…VGIG), 331–351 (IASI…NHAI), 387–407 (LVMT…GFLS), 424–444 (FSLI…IFTF), 472–492 (PWLF…IFFV), 527–547 (GFNI…VLAI), 595–615 (IIMT…RIGL), 627–647 (GALE…LIFI), 651–671 (LTMV…FIAM), 676–696 (LALT…VSFS), 712–732 (IIKI…IFIT), and 768–788 (LDTL…YTLL).

The protein belongs to the CPA3 antiporters (TC 2.A.63) subunit A family. In terms of assembly, may form a heterooligomeric complex that consists of seven subunits: mnhA2, mnhB2, mnhC2, mnhD2, mnhE2, mnhF2 and mnhG2.

The protein resides in the cell membrane. This chain is Putative antiporter subunit mnhA2 (mnhA2), found in Staphylococcus aureus (strain Mu3 / ATCC 700698).